Here is a 338-residue protein sequence, read N- to C-terminus: Phenylalanine--tRNA ligase alpha subunit (338 aa).

E252 is a binding site for Mg(2+).

This sequence belongs to the class-II aminoacyl-tRNA synthetase family. Phe-tRNA synthetase alpha subunit type 1 subfamily. In terms of assembly, tetramer of two alpha and two beta subunits. It depends on Mg(2+) as a cofactor.

The protein resides in the cytoplasm. The catalysed reaction is tRNA(Phe) + L-phenylalanine + ATP = L-phenylalanyl-tRNA(Phe) + AMP + diphosphate + H(+). This Pseudomonas aeruginosa (strain UCBPP-PA14) protein is Phenylalanine--tRNA ligase alpha subunit.